A 471-amino-acid polypeptide reads, in one-letter code: Alpha-amylase (471 aa).

Glutamine 1 is subject to Pyrrolidone carboxylic acid. A disulfide bridge links cysteine 28 with cysteine 84. Residues asparagine 98, arginine 146, and aspartate 155 each contribute to the Ca(2+) site. Residues cysteine 134 and cysteine 148 are joined by a disulfide bond. Arginine 183 provides a ligand contact to chloride. Aspartate 185 acts as the Nucleophile in catalysis. Ca(2+) is bound at residue histidine 189. Residue glutamate 222 is the Proton donor of the active site. Residues asparagine 285 and arginine 321 each coordinate chloride. A compositionally biased stretch (polar residues) spans 326–343 (FDFTDNDQGPPQDGSGNL). Positions 326 to 346 (FDFTDNDQGPPQDGSGNLISP) are disordered. Cystine bridges form between cysteine 354-cysteine 360 and cysteine 425-cysteine 437.

This sequence belongs to the glycosyl hydrolase 13 family. In terms of assembly, monomer. Ca(2+) is required as a cofactor. It depends on chloride as a cofactor.

The enzyme catalyses Endohydrolysis of (1-&gt;4)-alpha-D-glucosidic linkages in polysaccharides containing three or more (1-&gt;4)-alpha-linked D-glucose units.. This Tenebrio molitor (Yellow mealworm beetle) protein is Alpha-amylase.